Consider the following 459-residue polypeptide: tRNA modification GTPase MnmE (459 aa).

(6S)-5-formyl-5,6,7,8-tetrahydrofolate-binding residues include Arg-23, Glu-88, and Arg-127. The TrmE-type G domain maps to 223-381 (GLDVVIVGKP…LKEYIKDLFF (159 aa)). Residue Asn-233 coordinates K(+). GTP-binding positions include 233 to 238 (NVGKSS), 252 to 258 (TEIPGTT), and 277 to 280 (DTAG). Ser-237 contributes to the Mg(2+) binding site. Residues Thr-252, Ile-254, and Thr-257 each contribute to the K(+) site. Position 258 (Thr-258) interacts with Mg(2+). Lys-459 serves as a coordination point for (6S)-5-formyl-5,6,7,8-tetrahydrofolate.

Belongs to the TRAFAC class TrmE-Era-EngA-EngB-Septin-like GTPase superfamily. TrmE GTPase family. In terms of assembly, homodimer. Heterotetramer of two MnmE and two MnmG subunits. K(+) serves as cofactor.

It localises to the cytoplasm. Its function is as follows. Exhibits a very high intrinsic GTPase hydrolysis rate. Involved in the addition of a carboxymethylaminomethyl (cmnm) group at the wobble position (U34) of certain tRNAs, forming tRNA-cmnm(5)s(2)U34. The protein is tRNA modification GTPase MnmE of Clostridium tetani (strain Massachusetts / E88).